A 1005-amino-acid chain; its full sequence is Myosin IE heavy chain (1005 aa).

The region spanning 8–693 (EGVPDFVLLN…TLFYFEEKRE (686 aa)) is the Myosin motor domain. 101–108 (GESGAGKT) serves as a coordination point for ATP. The interval 539–562 (SDPLVQGLFPPTRPEDSKKRPETA) is disordered. Over residues 551 to 560 (RPEDSKKRPE) the composition is skewed to basic and acidic residues. An actin-binding region spans residues 556–630 (KKRPETAGSQ…RAGFAGRIEY (75 aa)). 2 consecutive IQ domains span residues 694–722 (LEMP…RKAA) and 716–745 (WNQR…HRAF). In terms of domain architecture, TH1 spans 810–1004 (KKKWDFRRHF…KGNQATIQFK (195 aa)).

Belongs to the TRAFAC class myosin-kinesin ATPase superfamily. Myosin family. In terms of assembly, myosin I heavy chain is single-headed. Dimer of a heavy and a light chain. Inability to self-assemble into filaments.

In terms of biological role, myosin is a protein that binds to actin and has ATPase activity that is activated by actin. May play a role in moving membranes relative to actin. This is Myosin IE heavy chain (myoE) from Dictyostelium discoideum (Social amoeba).